Reading from the N-terminus, the 133-residue chain is Putative pre-16S rRNA nuclease (133 aa).

This sequence belongs to the YqgF nuclease family.

It is found in the cytoplasm. Its function is as follows. Could be a nuclease involved in processing of the 5'-end of pre-16S rRNA. This chain is Putative pre-16S rRNA nuclease, found in Dehalococcoides mccartyi (strain ATCC BAA-2266 / KCTC 15142 / 195) (Dehalococcoides ethenogenes (strain 195)).